A 367-amino-acid chain; its full sequence is Prenyltransferase idtC (367 aa).

Residues 1 to 22 form the signal peptide; it reads MTTLAWFAGRSMVLDLAALTSA. Positions 32–42 are enriched in low complexity; that stretch reads TSTPTSTPTST. A disordered region spans residues 32–84; that stretch reads TSTPTSTPTSTDKAGTPPGSTIHHYGYPQGSVTKPNNSKTEKENGSPKDSKGN. Asn67 carries an N-linked (GlcNAc...) asparagine glycan. Positions 70–82 are enriched in basic and acidic residues; it reads KTEKENGSPKDSK. His132 contacts substrate. The Mg(2+) site is built by Asp139 and Asp143. Substrate is bound at residue Arg148. An N-linked (GlcNAc...) asparagine glycan is attached at Asn150. Residues Lys233, Thr234, Gln264, Asn271, and Lys281 each coordinate substrate.

The protein belongs to the FPP/GGPP synthase family. Requires Mg(2+) as cofactor.

It functions in the pathway secondary metabolite biosynthesis. In terms of biological role, prenyltransferase; part of the gene cluster that mediates the biosynthesis of paspalitrems, indole-diterpene (IDT) mycotoxins that are potent tremorgens in mammals. The geranylgeranyl diphosphate (GGPP) synthase idtG is proposed to catalyze the first step in IDT biosynthesis via catalysis of a series of iterative condensations of isopentenyl diphosphate (IPP) with dimethylallyl diphosphate (DMAPP), geranyl diphosphate (GPP), and farnesyl diphosphate (FPP), to form GGPP. Condensation of indole-3-glycerol phosphate with GGPP by the prenyltransferase idtC then forms 3-geranylgeranylindole (3-GGI). Epoxidation of the two terminal alkenes of the geranylgeranyl moiety by the FAD-dependent monooxygenase idtM, and cyclization by the terpene cyclase idtB then leads to the production of paspaline. The cytochrome P450 monooxygenase idtP then catalyzes oxidative elimination of the pendant methyl group at C-12 of paspaline and generates the C-10 ketone to yield 13-desoxypaxilline. The cytochrome P450 monooxygenase idtQ may catalyze the C-13 oxidation of 13-desoxypaxilline to afford paxilline. Considering that both paspalicine and paxilline were detected in C.paspali, idtQ also catalyzes the formation of paspalinine from 13-desoxypaxilline via paspalicine as an intermediate. Finally, the alpha-prenyltransferase idtF prenylates paspalinine at the C-20 or the C-21 positions to yield paspalitrems A and C, respectively. The hydroxylation of paspalitrem A at C-32 by a still unknown oxidase affords paspalitrem B. This is Prenyltransferase idtC from Claviceps paspali (Rye ergot fungus).